A 195-amino-acid polypeptide reads, in one-letter code: Insertion element IS136 uncharacterized protein Atu4601 (195 aa).

The Integrase catalytic domain maps to 25–194 (MVMRSNLRWC…SPRQFIRAKS (170 aa)).

This chain is Insertion element IS136 uncharacterized protein Atu4601, found in Agrobacterium fabrum (strain C58 / ATCC 33970) (Agrobacterium tumefaciens (strain C58)).